A 606-amino-acid polypeptide reads, in one-letter code: WD repeat-containing protein 1 (606 aa).

WD repeat units lie at residues 4–45 (EIKK…LRNI), 48–87 (PAIA…IWDT), 93–135 (LLKY…LWDS), 138–176 (SVGE…FFEG), 180–218 (KFKF…IYDG), 224–263 (VCAL…IWDV), 270–306 (NTFT…YLDK), 311–351 (KPLR…YWDS), 358–408 (SFAG…KLDV), 432–474 (LKDQ…LYSI), 480–518 (KDEG…VFSV), 523–561 (SENN…VWTL), and 566–604 (TRVK…EWTI). N6-acetyllysine is present on residues lysine 28, lysine 81, lysine 95, and lysine 115. Tyrosine 238 carries the post-translational modification Phosphotyrosine. Residue lysine 480 is modified to N6-acetyllysine.

The protein belongs to the WD repeat AIP1 family.

It localises to the cytoplasm. Its subcellular location is the cytoskeleton. It is found in the cell projection. The protein localises to the podosome. Its function is as follows. Induces disassembly of actin filaments in conjunction with ADF/cofilin family proteins. Enhances cofilin-mediated actin severing. Involved in cytokinesis. Involved in chemotactic cell migration by restricting lamellipodial membrane protrusions. Involved in myocardium sarcomere organization. Required for cardiomyocyte growth and maintenance. Involved in megakaryocyte maturation and platelet shedding. Required for the establishment of planar cell polarity (PCP) during follicular epithelium development and for cell shape changes during PCP; the function seems to implicate cooperation with CFL1 and/or DSTN/ADF. Involved in the generation/maintenance of cortical tension. Involved in assembly and maintenance of epithelial apical cell junctions and plays a role in the organization of the perijunctional actomyosin belt. The polypeptide is WD repeat-containing protein 1 (WDR1) (Bos taurus (Bovine)).